The primary structure comprises 163 residues: Crossover junction endodeoxyribonuclease RuvC (163 aa).

Catalysis depends on residues Asp4, Glu65, and Asp138. Mg(2+) is bound by residues Asp4, Glu65, and Asp138.

It belongs to the RuvC family. Homodimer which binds Holliday junction (HJ) DNA. The HJ becomes 2-fold symmetrical on binding to RuvC with unstacked arms; it has a different conformation from HJ DNA in complex with RuvA. In the full resolvosome a probable DNA-RuvA(4)-RuvB(12)-RuvC(2) complex forms which resolves the HJ. The cofactor is Mg(2+).

The protein resides in the cytoplasm. The enzyme catalyses Endonucleolytic cleavage at a junction such as a reciprocal single-stranded crossover between two homologous DNA duplexes (Holliday junction).. Functionally, the RuvA-RuvB-RuvC complex processes Holliday junction (HJ) DNA during genetic recombination and DNA repair. Endonuclease that resolves HJ intermediates. Cleaves cruciform DNA by making single-stranded nicks across the HJ at symmetrical positions within the homologous arms, yielding a 5'-phosphate and a 3'-hydroxyl group; requires a central core of homology in the junction. The consensus cleavage sequence is 5'-(A/T)TT(C/G)-3'. Cleavage occurs on the 3'-side of the TT dinucleotide at the point of strand exchange. HJ branch migration catalyzed by RuvA-RuvB allows RuvC to scan DNA until it finds its consensus sequence, where it cleaves and resolves the cruciform DNA. The protein is Crossover junction endodeoxyribonuclease RuvC of Corynebacterium jeikeium (strain K411).